A 216-amino-acid polypeptide reads, in one-letter code: Protein Syd (216 aa).

Belongs to the Syd family.

It is found in the cell inner membrane. Its function is as follows. Interacts with the SecY protein in vivo. May bind preferentially to an uncomplexed state of SecY, thus functioning either as a chelating agent for excess SecY in the cell or as a regulatory factor that negatively controls the translocase function. This chain is Protein Syd, found in Shewanella baltica (strain OS223).